Reading from the N-terminus, the 525-residue chain is GMP synthase [glutamine-hydrolyzing] (525 aa).

The Glutamine amidotransferase type-1 domain maps to 9 to 207 (RILILDFGSQ…VLDVCQCEAL (199 aa)). Cys86 (nucleophile) is an active-site residue. Catalysis depends on residues His181 and Glu183. The 193-residue stretch at 208-400 (WTPASIIEDT…LGLPYDMLNR (193 aa)) folds into the GMPS ATP-PPase domain. ATP is bound at residue 235-241 (SGGVDSS).

As to quaternary structure, homodimer.

It carries out the reaction XMP + L-glutamine + ATP + H2O = GMP + L-glutamate + AMP + diphosphate + 2 H(+). It participates in purine metabolism; GMP biosynthesis; GMP from XMP (L-Gln route): step 1/1. Its function is as follows. Catalyzes the synthesis of GMP from XMP. The sequence is that of GMP synthase [glutamine-hydrolyzing] from Photorhabdus laumondii subsp. laumondii (strain DSM 15139 / CIP 105565 / TT01) (Photorhabdus luminescens subsp. laumondii).